A 70-amino-acid polypeptide reads, in one-letter code: Small ribosomal subunit protein bS21B (70 aa).

This sequence belongs to the bacterial ribosomal protein bS21 family.

The sequence is that of Small ribosomal subunit protein bS21B (rpsU2) from Rhizobium meliloti (strain 1021) (Ensifer meliloti).